Reading from the N-terminus, the 517-residue chain is Crotonobetaine/carnitine--CoA ligase (517 aa).

This sequence belongs to the ATP-dependent AMP-binding enzyme family.

It carries out the reaction 4-(trimethylamino)butanoate + ATP + CoA = 4-(trimethylamino)butanoyl-CoA + AMP + diphosphate. It catalyses the reaction crotonobetaine + ATP + CoA = crotonobetainyl-CoA + AMP + diphosphate. The catalysed reaction is (R)-carnitine + ATP + CoA = (R)-carnitinyl-CoA + AMP + diphosphate. Its pathway is amine and polyamine metabolism; carnitine metabolism. Catalyzes the transfer of CoA to carnitine, generating the initial carnitinyl-CoA needed for the CaiB reaction cycle. Also has activity toward crotonobetaine and gamma-butyrobetaine. This is Crotonobetaine/carnitine--CoA ligase from Escherichia coli O1:K1 / APEC.